Consider the following 1099-residue polypeptide: ATP-dependent helicase/deoxyribonuclease subunit B (1099 aa).

Cysteine 766, cysteine 1056, cysteine 1059, and cysteine 1065 together coordinate [4Fe-4S] cluster.

It belongs to the helicase family. AddB/RexB type 2 subfamily. Heterodimer of AddA and RexB. Requires Mg(2+) as cofactor. [4Fe-4S] cluster serves as cofactor.

Its function is as follows. The heterodimer acts as both an ATP-dependent DNA helicase and an ATP-dependent, dual-direction single-stranded exonuclease. Recognizes the chi site generating a DNA molecule suitable for the initiation of homologous recombination. This subunit has 5' -&gt; 3' nuclease activity but not helicase activity. This Lactococcus lactis subsp. cremoris (strain SK11) protein is ATP-dependent helicase/deoxyribonuclease subunit B.